We begin with the raw amino-acid sequence, 69 residues long: Pleurain-A2 (69 aa).

An N-terminal signal peptide occupies residues 1-22 (MFTLKKTLLLLYFLGTISISLC). The propeptide occupies 23–43 (KQERDADEDDGRKMTEEEVKR). Cysteines 63 and 69 form a disulfide.

Expressed by the skin glands.

The protein resides in the secreted. Antimicrobial peptide. Has activity against the Gram-positive bacterium S.aureus ATCC2592 (MIC=15 ug/ml), the Gram-negative bacteria E.coli ATCC25922 (MIC=60 ug/ml), B.dysenteriae (MIC=60 ug/ml), H.pylori NTCT11637 (MIC=30 ug/ml), and the fungus C.albicans ATCC2002 (MIC=30 ug/ml). Has little hemolytic activity on rabbit red blood cells. The protein is Pleurain-A2 of Nidirana pleuraden (Yunnan pond frog).